A 448-amino-acid chain; its full sequence is MFGGWRLVVWQIFSEIITRRLGFWICLYFAALSVGMISGSEPLVRTRHIQNTHTVPINRSPGSLRAWQAGSTYVFGRQGGVITYSWPPHDRPSTRVDRLALGFSTLMEDATLVRVDSSAGLGDYLKLHIVKGNVVAVFNVGTYDINIEEKAKLVNDGNYHIVRFTRSGGNATLQVDDLPVIERFPPGHIDSHRLGTGRLPYRRLVEESLPKNGRQLTIFNSQMTIRIGGWQKQQVSGFQGQMSGFYYNGLKVFSMAADGDPNVRMEGSVRLVGELQSSSTPHGGATVYQSSVTEISSTTSNTITITYSTPADEQQTTDELLVASAECPSDDEDIDPCEPSSGTLCCFVPPAGPTGPAISSFPGPAEVFRESNGTTGMVVGIVAGAALCILILLYAMYKYRNRDEGSYHVDESRNYICNSNGAALKEKNTADDDSGSKSKKNKNKEYYV.

The signal sequence occupies residues 1-38 (MFGGWRLVVWQIFSEIITRRLGFWICLYFAALSVGMIS). Residues 39–375 (GSEPLVRTRH…EVFRESNGTT (337 aa)) lie on the Extracellular side of the membrane. The Laminin G-like domain maps to 71-269 (STYVFGRQGG…DPNVRMEGSV (199 aa)). A helical transmembrane segment spans residues 376–396 (GMVVGIVAGAALCILILLYAM). Topologically, residues 397–448 (YKYRNRDEGSYHVDESRNYICNSNGAALKEKNTADDDSGSKSKKNKNKEYYV) are cytoplasmic. Positions 426 to 436 (EKNTADDDSGS) are enriched in basic and acidic residues. Positions 426–448 (EKNTADDDSGSKSKKNKNKEYYV) are disordered.

It belongs to the neurexin family.

It localises to the membrane. Neuronal cell surface protein that may be involved in cell recognition and cell adhesion. May play a role in formation or maintenance of synaptic junctions. The chain is Neurexin-1b-beta (nrxn1b) from Danio rerio (Zebrafish).